The sequence spans 348 residues: Aspartate carbamoyltransferase catalytic subunit (348 aa).

Arginine 59 and threonine 60 together coordinate carbamoyl phosphate. Lysine 87 lines the L-aspartate pocket. Carbamoyl phosphate is bound by residues arginine 109, histidine 142, and glutamine 145. L-aspartate is bound by residues arginine 182 and arginine 253. Glycine 294 and proline 295 together coordinate carbamoyl phosphate.

The protein belongs to the aspartate/ornithine carbamoyltransferase superfamily. ATCase family. In terms of assembly, heterododecamer (2C3:3R2) of six catalytic PyrB chains organized as two trimers (C3), and six regulatory PyrI chains organized as three dimers (R2).

The catalysed reaction is carbamoyl phosphate + L-aspartate = N-carbamoyl-L-aspartate + phosphate + H(+). The protein operates within pyrimidine metabolism; UMP biosynthesis via de novo pathway; (S)-dihydroorotate from bicarbonate: step 2/3. Catalyzes the condensation of carbamoyl phosphate and aspartate to form carbamoyl aspartate and inorganic phosphate, the committed step in the de novo pyrimidine nucleotide biosynthesis pathway. In Prochlorococcus marinus (strain MIT 9313), this protein is Aspartate carbamoyltransferase catalytic subunit.